Reading from the N-terminus, the 351-residue chain is Protein Wnt-8a (351 aa).

The first 24 residues, 1–24 (MGNLFMLWAALGICCAAFSASAWS), serve as a signal peptide directing secretion. A disulfide bridge connects residues Cys-54 and Cys-65. N-linked (GlcNAc...) asparagine glycosylation is present at Asn-103. Intrachain disulfides connect Cys-104–Cys-112, Cys-114–Cys-132, Cys-180–Cys-194, Cys-182–Cys-189, Cys-259–Cys-297, Cys-275–Cys-290, Cys-294–Cys-336, Cys-312–Cys-327, Cys-314–Cys-324, and Cys-319–Cys-320. A lipid anchor (O-palmitoleoyl serine) is attached at Ser-186. Residues Asn-262 and Asn-281 are each glycosylated (N-linked (GlcNAc...) asparagine).

Belongs to the Wnt family. Forms a soluble 1:1 complex with AFM; this prevents oligomerization and is required for prolonged biological activity. The complex with AFM may represent the physiological form in body fluids. In terms of processing, palmitoleoylation is required for efficient binding to frizzled receptors. Depalmitoleoylation leads to Wnt signaling pathway inhibition. Post-translationally, proteolytic processing by TIKI1 and TIKI2 promotes oxidation and formation of large disulfide-bond oligomers, leading to inactivation of WNT8A.

Its subcellular location is the secreted. The protein localises to the extracellular space. It localises to the extracellular matrix. Ligand for members of the frizzled family of seven transmembrane receptors. Plays a role in embryonic patterning. This chain is Protein Wnt-8a (WNT8A), found in Homo sapiens (Human).